The following is an 83-amino-acid chain: Small ribosomal subunit protein bS16 (83 aa).

The protein belongs to the bacterial ribosomal protein bS16 family.

This chain is Small ribosomal subunit protein bS16, found in Syntrophus aciditrophicus (strain SB).